Here is a 532-residue protein sequence, read N- to C-terminus: Phosphoenolpyruvate carboxykinase (ATP) (532 aa).

3 residues coordinate substrate: R60, Y194, and K200. ATP-binding positions include K200, H219, and 237-245; that span reads GLSGTGKTT. Mn(2+) contacts are provided by K200 and H219. Mn(2+) is bound at residue D258. Residues E286, R324, and T449 each coordinate ATP. R324 lines the substrate pocket.

It belongs to the phosphoenolpyruvate carboxykinase (ATP) family. Mn(2+) is required as a cofactor.

Its subcellular location is the cytoplasm. It carries out the reaction oxaloacetate + ATP = phosphoenolpyruvate + ADP + CO2. It functions in the pathway carbohydrate biosynthesis; gluconeogenesis. Functionally, involved in the gluconeogenesis. Catalyzes the conversion of oxaloacetate (OAA) to phosphoenolpyruvate (PEP) through direct phosphoryl transfer between the nucleoside triphosphate and OAA. This Ruegeria pomeroyi (strain ATCC 700808 / DSM 15171 / DSS-3) (Silicibacter pomeroyi) protein is Phosphoenolpyruvate carboxykinase (ATP).